Here is a 375-residue protein sequence, read N- to C-terminus: Growth/differentiation factor 8 (375 aa).

An N-terminal signal peptide occupies residues 1–18 (MQRLQICVYIYLFVLIVA). Residues 19 to 266 (GPVDLSENSE…VTDTPKRSRR (248 aa)) constitute a propeptide that is removed on maturation. N-linked (GlcNAc...) asparagine glycosylation is present at Asn71. Intrachain disulfides connect Cys281–Cys340, Cys309–Cys372, and Cys313–Cys374.

This sequence belongs to the TGF-beta family. Homodimer; disulfide-linked. Interacts with WFIKKN2, leading to inhibit its activity. Interacts with FSTL3. Post-translationally, synthesized as large precursor molecule that undergoes proteolytic cleavage to generate an N-terminal propeptide and a disulfide linked C-terminal dimer, which is the biologically active molecule. The circulating form consists of a latent complex of the C-terminal dimer and other proteins, including its propeptide, which maintain the C-terminal dimer in a latent, inactive state. Ligand activation requires additional cleavage of the prodomain by a tolloid-like metalloproteinase.

Its subcellular location is the secreted. In terms of biological role, acts specifically as a negative regulator of skeletal muscle growth. This is Growth/differentiation factor 8 (MSTN) from Vulpes vulpes (Red fox).